Consider the following 37-residue polypeptide: Esculentin-2A (37 aa).

Residues C31 and C37 are joined by a disulfide bond.

The protein belongs to the frog skin active peptide (FSAP) family. Esculentin subfamily. In terms of tissue distribution, expressed by the skin glands.

Its subcellular location is the secreted. Its function is as follows. Shows antibacterial activity against representative Gram-negative and Gram-positive bacterial species, and hemolytic activity. This is Esculentin-2A from Pelophylax lessonae (Pool frog).